The sequence spans 106 residues: ATP-dependent Clp protease adapter protein ClpS (106 aa).

The span at 1 to 13 (MPRKTSHEHDHGL) shows a compositional bias: basic and acidic residues. The tract at residues 1–21 (MPRKTSHEHDHGLVVETSKPE) is disordered.

Belongs to the ClpS family. In terms of assembly, binds to the N-terminal domain of the chaperone ClpA.

In terms of biological role, involved in the modulation of the specificity of the ClpAP-mediated ATP-dependent protein degradation. In Xanthomonas campestris pv. campestris (strain 8004), this protein is ATP-dependent Clp protease adapter protein ClpS.